The chain runs to 237 residues: Phosphoadenosine 5'-phosphosulfate reductase (237 aa).

The Nucleophile; cysteine thiosulfonate intermediate role is filled by Cys-231.

This sequence belongs to the PAPS reductase family. CysH subfamily.

The protein resides in the cytoplasm. The catalysed reaction is [thioredoxin]-disulfide + sulfite + adenosine 3',5'-bisphosphate + 2 H(+) = [thioredoxin]-dithiol + 3'-phosphoadenylyl sulfate. It functions in the pathway sulfur metabolism; hydrogen sulfide biosynthesis; sulfite from sulfate: step 3/3. Its function is as follows. Catalyzes the formation of sulfite from phosphoadenosine 5'-phosphosulfate (PAPS) using thioredoxin as an electron donor. This chain is Phosphoadenosine 5'-phosphosulfate reductase, found in Xylella fastidiosa (strain M23).